Reading from the N-terminus, the 426-residue chain is Glutamate-1-semialdehyde 2,1-aminomutase (426 aa).

K265 bears the N6-(pyridoxal phosphate)lysine mark.

This sequence belongs to the class-III pyridoxal-phosphate-dependent aminotransferase family. HemL subfamily. In terms of assembly, homodimer. Pyridoxal 5'-phosphate serves as cofactor.

The protein resides in the cytoplasm. The enzyme catalyses (S)-4-amino-5-oxopentanoate = 5-aminolevulinate. The protein operates within porphyrin-containing compound metabolism; protoporphyrin-IX biosynthesis; 5-aminolevulinate from L-glutamyl-tRNA(Glu): step 2/2. In Paraburkholderia phymatum (strain DSM 17167 / CIP 108236 / LMG 21445 / STM815) (Burkholderia phymatum), this protein is Glutamate-1-semialdehyde 2,1-aminomutase.